We begin with the raw amino-acid sequence, 470 residues long: Sugar transporter ESL1 (470 aa).

Positions 10–16 match the Essential for the localization to the vacuole membrane motif; the sequence is LEAGLLL. The next 12 helical transmembrane spans lie at 28 to 48, 68 to 88, 99 to 119, 130 to 150, 157 to 177, 186 to 206, 268 to 288, 303 to 323, 332 to 352, 368 to 388, 404 to 424, and 430 to 450; these read ITAVVLFSTFVSVCGSFCFGC, VAQYSMFGSIMTFGGMIGAIF, KGTMWFAQIFCIFGWVAVALA, LSTGFAVGLLSYVIPVYIAEI, GAFVFANQLMQSCGLSLFYVI, LALIGLIPCALQVVTLFFIPE, VVIGVGLMLLQQLSGSSGLMY, IGSMILAVIMIPKALLGLILV, LLASTGGMCFFSLLLSFSFCF, IGVVGFISSFAVGMGGLPWII, LVTLANWSFGWIVAFAYNFML, and GTFLIFFTICGAGIVFIYAMV.

It belongs to the major facilitator superfamily. Sugar transporter (TC 2.A.1.1) family. Expressed in both shoots and roots. In roots, strongly expressed in pericycle and xylem parenchyma cells, and to a lesser extent in the root endodermis. In flowers, expressed in sepals.

The protein resides in the vacuole membrane. The protein localises to the vesicle. In terms of biological role, sugar transporter. Transports monosaccharides across the vacuolar membrane independently from a proton gradient. May function coordinately with the vacuolar invertase to regulate osmotic pressure by affecting the accumulation of sugar in the cells under abiotic stress conditions. The sequence is that of Sugar transporter ESL1 from Arabidopsis thaliana (Mouse-ear cress).